The sequence spans 187 residues: ATP synthase subunit b (187 aa).

The chain crosses the membrane as a helical span at residues 31–51 (VAIMGLAIFVLFLILSYLLFN).

Belongs to the ATPase B chain family. F-type ATPases have 2 components, F(1) - the catalytic core - and F(0) - the membrane proton channel. F(1) has five subunits: alpha(3), beta(3), gamma(1), delta(1), epsilon(1). F(0) has three main subunits: a(1), b(2) and c(10-14). The alpha and beta chains form an alternating ring which encloses part of the gamma chain. F(1) is attached to F(0) by a central stalk formed by the gamma and epsilon chains, while a peripheral stalk is formed by the delta and b chains.

The protein resides in the cell membrane. In terms of biological role, f(1)F(0) ATP synthase produces ATP from ADP in the presence of a proton or sodium gradient. F-type ATPases consist of two structural domains, F(1) containing the extramembraneous catalytic core and F(0) containing the membrane proton channel, linked together by a central stalk and a peripheral stalk. During catalysis, ATP synthesis in the catalytic domain of F(1) is coupled via a rotary mechanism of the central stalk subunits to proton translocation. Its function is as follows. Component of the F(0) channel, it forms part of the peripheral stalk, linking F(1) to F(0). The chain is ATP synthase subunit b from Lachnoclostridium phytofermentans (strain ATCC 700394 / DSM 18823 / ISDg) (Clostridium phytofermentans).